The following is a 625-amino-acid chain: Somatic embryogenesis receptor kinase 1 (625 aa).

A signal peptide spans 1 to 26 (MESSYVVFILLSLILLPNHSLWLASA). Over 27 to 238 (NLEGDALHTL…STPSGYGITG (212 aa)) the chain is Extracellular. Cys58 and Cys65 form a disulfide bridge. Leucine-rich repeat receptor-like protein kinase binding stretches follow at residues 59–78 (TWFH…DLGN) and 97–102 (YLELYS). 61 to 62 (FH) is a brassinolide binding site. 4 LRR repeats span residues 92 to 116 (LKNL…LGNL), 118 to 140 (NLVS…LGKL), 141 to 164 (SKLR…LTNI), and 165 to 189 (TTLQ…SFSL). N-linked (GlcNAc...) asparagine glycans are attached at residues Asn104 and Asn115. Leucine-rich repeat receptor-like protein kinase binding regions lie at residues 123 to 126 (DLYL) and 145 to 147 (FLR). 3 N-linked (GlcNAc...) asparagine glycosylation sites follow: Asn150, Asn163, and Asn184. The leucine-rich repeat receptor-like protein kinase binding stretch occupies residues 171–194 (DLSNNRLSGSVPDNGSFSLFTPIS). Cys202 and Cys210 are disulfide-bonded. The chain crosses the membrane as a helical span at residues 239-259 (AIAGGVAAGAALLFAAPAIAF). Residues 260 to 625 (AWWRRRKPLD…LHAVELSGPR (366 aa)) are Cytoplasmic-facing. Phosphoserine occurs at positions 291, 299, and 303. The 288-residue stretch at 302–589 (FSNKNILGRG…GLAEKWDEWQ (288 aa)) folds into the Protein kinase domain. Residue 308-316 (LGRGGFGKV) participates in ATP binding. Phosphothreonine is present on Thr325. Lys330 provides a ligand contact to ATP. A phosphothreonine mark is found at Thr337 and Thr346. A phosphoserine mark is found at Ser352, Ser383, Ser386, and Ser394. The residue at position 402 (Thr402) is a Phosphothreonine. Position 415 is a phosphoserine (Ser415). The active-site Proton acceptor is Asp429. Tyr456 is subject to Phosphotyrosine. A phosphothreonine mark is found at Thr459, Thr462, Thr463, and Thr468. A Phosphotyrosine modification is found at Tyr476. Ser478 bears the Phosphoserine mark. At Thr479 the chain carries Phosphothreonine. A Phosphoserine modification is found at Ser483. Thr541 bears the Phosphothreonine mark. Tyr543 carries the phosphotyrosine modification. Residue Thr559 is modified to Phosphothreonine. Phosphoserine is present on residues Ser606 and Ser612. Residue Thr613 is modified to Phosphothreonine. The residue at position 614 (Tyr614) is a Phosphotyrosine. At Ser622 the chain carries Phosphoserine.

Belongs to the protein kinase superfamily. Ser/Thr protein kinase family. As to quaternary structure, monomer, homo- and heterodimer. Interacts with KAPP, CDC48A, GRF6 or GRF7, SERK2, BRI1 and SERK3/BAK1 to form the SERK1 signaling complex. Bind to BRI1 in a brassinolide-dependent manner. Heterodimer with PSKR1. Interacts with the EF-Tu receptor EFR and FLS2 in a specific ligand-induced manner. Interacts with ERECTA in a EPF2-induced manner. Interacts with ERL1 in a EPF1-induced manner. Interacts with TMM. In the presence of the signal peptide RGF1, interacts with RGI1/RGFR4/RCH2, RGI2/RGFR3/RCH1, RGI3/RGFR1, RGI4/RGFR2/SKM2 and RGI5/RGFR5. Requires Mg(2+) as cofactor. Glycosylated. Important for targeting to the plasma membrane. Post-translationally, intermolecular autophosphorylation. The catalytic activity of SERK1 depends on the presence of a phosphorylated Thr residue in SERK1. The phosphorylation is induced by brassinosteroids. Transphosphorylation by BRI1 occurs only on Ser-299 and Thr-462. Dephosphorylation of threonine residues by the kinase-associated protein phosphatase (KAPP) is involved in SERK1 endocytosis. As to expression, expressed in flowers, tapetum, developing microspores, all cells of the embryo sac, provascular strands and developing vascular bundles. Low expression in adult vascular tissue. Detected in root meristem.

Its subcellular location is the cell membrane. It is found in the endoplasmic reticulum membrane. It catalyses the reaction L-seryl-[protein] + ATP = O-phospho-L-seryl-[protein] + ADP + H(+). It carries out the reaction L-threonyl-[protein] + ATP = O-phospho-L-threonyl-[protein] + ADP + H(+). The catalysed reaction is L-tyrosyl-[protein] + ATP = O-phospho-L-tyrosyl-[protein] + ADP + H(+). Inhibited by manganese. Dual specificity kinase acting on both serine/threonine- and tyrosine-containing substrates. Phosphorylates BRI1 on 'Ser-887' and CDC48 on at least one threonine residue and on 'Ser-41'. Confers embryogenic competence. Acts redundantly with SERK2 as a control point for sporophytic development controlling male gametophyte production. Involved in the brassinolide signaling pathway. Probably required during small peptide (e.g. RGF1) signaling. Involved in the perception of phytosulfokine and subsequent signal transduction. Acts as a RLK5 coreceptor and promotes high-affinity IDA sensing, thus being a positive regulator of floral abscission. The polypeptide is Somatic embryogenesis receptor kinase 1 (Arabidopsis thaliana (Mouse-ear cress)).